The primary structure comprises 500 residues: Glutathione gamma-glutamylcysteinyltransferase 1 (500 aa).

The Peptidase C83 domain maps to 1 to 221; it reads MEVASLYRRV…GFMLVSRRSS (221 aa). Residues C56, H162, and D180 contribute to the active site.

It belongs to the phytochelatin synthase family. As to expression, expressed in roots and shoots.

It catalyses the reaction [Glu(-Cys)](n)-Gly + glutathione + H(+) = [Glu(-Cys)](n+1)-Gly + glycine. Its activity is regulated as follows. Requires cadmium for activity. Functionally, involved in the synthesis of phytochelatins (PC) and homophytochelatins (hPC), the heavy-metal-binding peptides of plants. In Triticum aestivum (Wheat), this protein is Glutathione gamma-glutamylcysteinyltransferase 1 (PCS1).